The chain runs to 346 residues: NADH-ubiquinone oxidoreductase chain 2 (346 aa).

11 helical membrane-spanning segments follow: residues Met-1–Ser-21, Trp-26–Trp-46, Phe-60–Gly-80, Met-96–Val-116, Leu-122–Leu-142, Ser-151–Gly-171, Leu-178–Ser-198, Leu-199–Leu-219, Val-242–Gly-262, Leu-274–Leu-294, and Leu-320–Gly-340.

This sequence belongs to the complex I subunit 2 family.

It is found in the mitochondrion inner membrane. The catalysed reaction is a ubiquinone + NADH + 5 H(+)(in) = a ubiquinol + NAD(+) + 4 H(+)(out). In terms of biological role, core subunit of the mitochondrial membrane respiratory chain NADH dehydrogenase (Complex I) that is believed to belong to the minimal assembly required for catalysis. Complex I functions in the transfer of electrons from NADH to the respiratory chain. The immediate electron acceptor for the enzyme is believed to be ubiquinone. The polypeptide is NADH-ubiquinone oxidoreductase chain 2 (ND2) (Branchiostoma floridae (Florida lancelet)).